We begin with the raw amino-acid sequence, 933 residues long: Isoleucine--tRNA ligase (933 aa).

Positions 57 to 67 (PYANGNIHVGH) match the 'HIGH' region motif. Position 554 (Glu554) interacts with L-isoleucyl-5'-AMP. A 'KMSKS' region motif is present at residues 595-599 (KMSKS). Lys598 serves as a coordination point for ATP.

This sequence belongs to the class-I aminoacyl-tRNA synthetase family. IleS type 1 subfamily. In terms of assembly, monomer.

Its subcellular location is the cytoplasm. It carries out the reaction tRNA(Ile) + L-isoleucine + ATP = L-isoleucyl-tRNA(Ile) + AMP + diphosphate. Its function is as follows. Catalyzes the attachment of isoleucine to tRNA(Ile). As IleRS can inadvertently accommodate and process structurally similar amino acids such as valine, to avoid such errors it has two additional distinct tRNA(Ile)-dependent editing activities. One activity is designated as 'pretransfer' editing and involves the hydrolysis of activated Val-AMP. The other activity is designated 'posttransfer' editing and involves deacylation of mischarged Val-tRNA(Ile). The sequence is that of Isoleucine--tRNA ligase from Streptococcus pyogenes serotype M18 (strain MGAS8232).